The chain runs to 156 residues: Calcium-binding protein A (156 aa).

EF-hand domains follow at residues 4–39 (AITKDVEDMLRKFDSNGDGNITFDEAVKRLKETGSK), 40–75 (DPLRAASSMFISLDKDKDGIISIKEIHGHKADVAAK), 80–115 (AINNICNNFLKGYDTDKDGRISWDEVCNWVNKNNPD), and 118–153 (APLMIVENFFSELDKDNDRFVTKCELQEYVTKYKSL). Ca(2+) contacts are provided by D17, N19, D21, N23, E28, D53, D55, D57, E64, D93, D95, D97, R99, E104, D131, D133, D135, and E142.

This chain is Calcium-binding protein A (cbpA), found in Dictyostelium discoideum (Social amoeba).